The following is a 549-amino-acid chain: DNA ligase 1 (549 aa).

Glu-212 is a binding site for ATP. Lys-214 acts as the N6-AMP-lysine intermediate in catalysis. Residues Arg-219, Arg-234, Glu-264, Phe-310, Arg-387, and Lys-393 each contribute to the ATP site.

The protein belongs to the ATP-dependent DNA ligase family. Mg(2+) is required as a cofactor.

The catalysed reaction is ATP + (deoxyribonucleotide)n-3'-hydroxyl + 5'-phospho-(deoxyribonucleotide)m = (deoxyribonucleotide)n+m + AMP + diphosphate.. In terms of biological role, DNA ligase that seals nicks in double-stranded DNA during DNA replication, DNA recombination and DNA repair. This chain is DNA ligase 1, found in Methanosarcina barkeri (strain Fusaro / DSM 804).